A 200-amino-acid polypeptide reads, in one-letter code: Imidazoleglycerol-phosphate dehydratase (200 aa).

Belongs to the imidazoleglycerol-phosphate dehydratase family.

Its subcellular location is the cytoplasm. It carries out the reaction D-erythro-1-(imidazol-4-yl)glycerol 3-phosphate = 3-(imidazol-4-yl)-2-oxopropyl phosphate + H2O. It functions in the pathway amino-acid biosynthesis; L-histidine biosynthesis; L-histidine from 5-phospho-alpha-D-ribose 1-diphosphate: step 6/9. This chain is Imidazoleglycerol-phosphate dehydratase, found in Leifsonia xyli subsp. xyli (strain CTCB07).